We begin with the raw amino-acid sequence, 200 residues long: Small ribosomal subunit protein uS4c (200 aa).

In terms of domain architecture, S4 RNA-binding spans 91–154; sequence MRLDNVVFRL…NSRKMVTEAN (64 aa).

It belongs to the universal ribosomal protein uS4 family. As to quaternary structure, part of the 30S ribosomal subunit. Contacts protein S5. The interaction surface between S4 and S5 is involved in control of translational fidelity.

The protein resides in the plastid. It is found in the chloroplast. Its function is as follows. One of the primary rRNA binding proteins, it binds directly to 16S rRNA where it nucleates assembly of the body of the 30S subunit. With S5 and S12 plays an important role in translational accuracy. The polypeptide is Small ribosomal subunit protein uS4c (rps4) (Oltmannsiellopsis viridis (Marine flagellate)).